Consider the following 465-residue polypeptide: ATP synthase subunit beta (465 aa).

ATP is bound at residue 152–159 (GGAGVGKT).

This sequence belongs to the ATPase alpha/beta chains family. In terms of assembly, F-type ATPases have 2 components, CF(1) - the catalytic core - and CF(0) - the membrane proton channel. CF(1) has five subunits: alpha(3), beta(3), gamma(1), delta(1), epsilon(1). CF(0) has three main subunits: a(1), b(2) and c(9-12). The alpha and beta chains form an alternating ring which encloses part of the gamma chain. CF(1) is attached to CF(0) by a central stalk formed by the gamma and epsilon chains, while a peripheral stalk is formed by the delta and b chains.

Its subcellular location is the cell inner membrane. The enzyme catalyses ATP + H2O + 4 H(+)(in) = ADP + phosphate + 5 H(+)(out). In terms of biological role, produces ATP from ADP in the presence of a proton gradient across the membrane. The catalytic sites are hosted primarily by the beta subunits. This Campylobacter jejuni subsp. jejuni serotype O:6 (strain 81116 / NCTC 11828) protein is ATP synthase subunit beta.